A 374-amino-acid polypeptide reads, in one-letter code: Very late expression factor 1 (374 aa).

In terms of domain architecture, Tyr recombinase spans 169 to 349 (AIDTILNFID…NFDESSSDEE (181 aa)). Catalysis depends on residues Arg-210, Lys-239, Arg-303, and His-326. The segment at 328 to 374 (SPASTKPYLNKYNFDESSSDEESGGNNRDSSTGSSANSSSLYYQTGD) is disordered. Tyr-335 acts as the O-(3'-phospho-DNA)-tyrosine intermediate in catalysis. The span at 357–367 (SSTGSSANSSS) shows a compositional bias: low complexity.

Belongs to the 'phage' integrase family.

Involved in very late gene activation. The polypeptide is Very late expression factor 1 (VLF-1) (Orgyia pseudotsugata (Douglas-fir tussock moth)).